Here is a 202-residue protein sequence, read N- to C-terminus: ATP-dependent Clp protease proteolytic subunit (202 aa).

Residue serine 106 is the Nucleophile of the active site. The active site involves histidine 131.

This sequence belongs to the peptidase S14 family. In terms of assembly, fourteen ClpP subunits assemble into 2 heptameric rings which stack back to back to give a disk-like structure with a central cavity, resembling the structure of eukaryotic proteasomes.

The protein resides in the cytoplasm. It carries out the reaction Hydrolysis of proteins to small peptides in the presence of ATP and magnesium. alpha-casein is the usual test substrate. In the absence of ATP, only oligopeptides shorter than five residues are hydrolyzed (such as succinyl-Leu-Tyr-|-NHMec, and Leu-Tyr-Leu-|-Tyr-Trp, in which cleavage of the -Tyr-|-Leu- and -Tyr-|-Trp bonds also occurs).. Functionally, cleaves peptides in various proteins in a process that requires ATP hydrolysis. Has a chymotrypsin-like activity. Plays a major role in the degradation of misfolded proteins. This is ATP-dependent Clp protease proteolytic subunit from Methylibium petroleiphilum (strain ATCC BAA-1232 / LMG 22953 / PM1).